The chain runs to 1083 residues: Solute carrier family 12 member 7 (1083 aa).

The interval 1-51 (MPTNFTVVPVEARADGAGDEAAERTEEPGSPESADPACPTPGDGNPRENSP) is disordered. At 1–119 (MPTNFTVVPV…RREIKAPRMG (119 aa)) the chain is on the cytoplasmic side. Positions 12–27 (ARADGAGDEAAERTEE) are enriched in basic and acidic residues. A phosphoserine mark is found at S30, S33, S50, and S62. The chain crosses the membrane as a discontinuously helical span at residues 120 to 142 (TFIGVYLPCLQNILGVILFLRLT). K(+)-binding residues include N131 and I132. V135 contacts chloride. Topologically, residues 143 to 149 (WIVGAAG) are extracellular. Residues 150 to 172 (VLESFLIVAMCCTCTMLTAISMS) traverse the membrane as a helical segment. Residues 173 to 196 (AIATNGVVPAGGSYYMISRSLGPE) are Cytoplasmic-facing. A helical transmembrane segment spans residues 197–225 (FGGAVGLCFYLGTTFAGAMYILGTIEIFL). Residues 226-249 (TYISPSAAIFQAETADGEAAALLN) lie on the Extracellular side of the membrane. The next 2 helical transmembrane spans lie at 250-271 (NMRVYGSCALALMAVVVFVGVK) and 272-300 (YVNKLALVFLACVVLSILAIYAGVIKTAF). Residues 301–419 (APPDIPVCLL…PYVLTDIMTY (119 aa)) are Extracellular-facing. N-linked (GlcNAc...) asparagine glycans are attached at residues N312, N331, and N360. The helical transmembrane segment at 420–440 (FTMLVGIYFPSVTGIMAGSNR) threads the bilayer. K(+) contacts are provided by P429 and T432. P429 provides a ligand contact to chloride. Positions 433 and 434 each coordinate chloride. Over 441–450 (SGDLKDAQKS) the chain is Cytoplasmic. Residues 451–473 (IPTGTILAIVTTSFIYLSCIVLF) form a helical membrane-spanning segment. At 474–504 (GACIEGVVLRDKFGEALQGNLVIGMLAWPSP) the chain is on the extracellular side. The helical transmembrane segment at 505 to 531 (WVIVIGSFFSTCGAGLQSLTGAPRLLQ) threads the bilayer. Residues 532-554 (AIARDGIIPFLQVFGHGKANGEP) lie on the Cytoplasmic side of the membrane. 2 consecutive transmembrane segments (helical) span residues 555-573 (TWALLLTALICETGILIAS) and 574-598 (LDSVAPILSMFFLMCYMFVNLACAV). Position 589 (Y589) interacts with chloride. The Cytoplasmic segment spans residues 599 to 612 (QTLLRTPNWRPRFK). 2 consecutive transmembrane segments (helical) span residues 613 to 635 (FYHWTLSFLGMSLCLALMFICSW) and 636 to 651 (YYALFAMLIAGCIYKY). The Cytoplasmic segment spans residues 652-1083 (IEYRGAEKEW…GGREVITIYS (432 aa)). Residues 664–680 (GIRGLSLNAARYALLRV) form a scissor helix region. Residues T973 and T980 each carry the phosphothreonine modification.

This sequence belongs to the SLC12A transporter family. K/Cl co-transporter subfamily. Homodimer; adopts a domain-swap conformation at the scissor helices connecting the transmembrane domain and C-terminal domain. Heterodimer with K-Cl cotransporter SLC12A5. In terms of tissue distribution, widely expressed with highest levels in kidney, liver and pancreas. Expressed in choroid plexus and suprachiasmatic nucleus.

The protein resides in the cell membrane. The catalysed reaction is K(+)(in) + chloride(in) = K(+)(out) + chloride(out). Its activity is regulated as follows. Activated by N-ethylmaleimide (NEM). Inhibited by furosemide, DIDS and bumetanide. The inhibition is much stronger in the presence of 50 mM K(+) in the uptake medium. Inhibited by DIOA. Inhibited by WNK3. In terms of biological role, mediates electroneutral potassium-chloride cotransport when activated by cell swelling. May mediate K(+) uptake into Deiters' cells in the cochlea and contribute to K(+) recycling in the inner ear. Important for the survival of cochlear outer and inner hair cells and the maintenance of the organ of Corti. May be required for basolateral Cl(-) extrusion in the kidney and contribute to renal acidification. This is Solute carrier family 12 member 7 from Rattus norvegicus (Rat).